The following is a 238-amino-acid chain: Uridylate kinase (238 aa).

An ATP-binding site is contributed by 12-15; that stretch reads KLSG. G54 provides a ligand contact to UMP. ATP contacts are provided by G55 and R59. UMP is bound by residues D74 and 135-142; that span reads TGNPYFTT. 4 residues coordinate ATP: T162, N163, Y168, and D171.

This sequence belongs to the UMP kinase family. Homohexamer.

The protein resides in the cytoplasm. The catalysed reaction is UMP + ATP = UDP + ADP. Its pathway is pyrimidine metabolism; CTP biosynthesis via de novo pathway; UDP from UMP (UMPK route): step 1/1. Inhibited by UTP. Its function is as follows. Catalyzes the reversible phosphorylation of UMP to UDP. The protein is Uridylate kinase of Bradyrhizobium sp. (strain BTAi1 / ATCC BAA-1182).